Reading from the N-terminus, the 367-residue chain is tRNA-specific 2-thiouridylase MnmA (367 aa).

ATP contacts are provided by residues 9 to 16 and M35; that span reads GLSGGVDS. The interval 95–97 is interaction with target base in tRNA; sequence NPD. The active-site Nucleophile is the C100. Residues C100 and C196 are joined by a disulfide bond. G124 provides a ligand contact to ATP. An interaction with tRNA region spans residues 146 to 148; that stretch reads KDQ. The active-site Cysteine persulfide intermediate is the C196. An interaction with tRNA region spans residues 308–309; sequence RY.

It belongs to the MnmA/TRMU family.

It is found in the cytoplasm. The catalysed reaction is S-sulfanyl-L-cysteinyl-[protein] + uridine(34) in tRNA + AH2 + ATP = 2-thiouridine(34) in tRNA + L-cysteinyl-[protein] + A + AMP + diphosphate + H(+). Functionally, catalyzes the 2-thiolation of uridine at the wobble position (U34) of tRNA, leading to the formation of s(2)U34. The chain is tRNA-specific 2-thiouridylase MnmA from Nitrosococcus oceani (strain ATCC 19707 / BCRC 17464 / JCM 30415 / NCIMB 11848 / C-107).